Reading from the N-terminus, the 256-residue chain is Probable serine/threonine-protein kinase YbdM (256 aa).

The Protein kinase domain maps to 25–256 (YKIEECLGMG…DLNRAIQSVT (232 aa)). Residues 31 to 39 (LGMGGYGLV) and Lys54 each bind ATP. The Proton acceptor role is filled by Asp149.

The protein belongs to the protein kinase superfamily. Ser/Thr protein kinase family.

The enzyme catalyses L-seryl-[protein] + ATP = O-phospho-L-seryl-[protein] + ADP + H(+). The catalysed reaction is L-threonyl-[protein] + ATP = O-phospho-L-threonyl-[protein] + ADP + H(+). The sequence is that of Probable serine/threonine-protein kinase YbdM (ybdM) from Bacillus subtilis (strain 168).